The following is an 89-amino-acid chain: MSLSTEAKAKIVAEFGRDANDTGSSEVQIALLTAEINHLQGHFSEHKKDHHSRRGLLRKVSSRRNLLDYLKRKDVARYTALIERLGLRR.

Belongs to the universal ribosomal protein uS15 family. Part of the 30S ribosomal subunit. Forms a bridge to the 50S subunit in the 70S ribosome, contacting the 23S rRNA.

Its function is as follows. One of the primary rRNA binding proteins, it binds directly to 16S rRNA where it helps nucleate assembly of the platform of the 30S subunit by binding and bridging several RNA helices of the 16S rRNA. Forms an intersubunit bridge (bridge B4) with the 23S rRNA of the 50S subunit in the ribosome. This Proteus mirabilis (strain HI4320) protein is Small ribosomal subunit protein uS15.